The following is a 444-amino-acid chain: Glutamate-1-semialdehyde 2,1-aminomutase (444 aa).

Lysine 267 is modified (N6-(pyridoxal phosphate)lysine).

The protein belongs to the class-III pyridoxal-phosphate-dependent aminotransferase family. HemL subfamily. In terms of assembly, homodimer. The cofactor is pyridoxal 5'-phosphate.

Its subcellular location is the cytoplasm. The catalysed reaction is (S)-4-amino-5-oxopentanoate = 5-aminolevulinate. The protein operates within porphyrin-containing compound metabolism; protoporphyrin-IX biosynthesis; 5-aminolevulinate from L-glutamyl-tRNA(Glu): step 2/2. In Xylella fastidiosa (strain Temecula1 / ATCC 700964), this protein is Glutamate-1-semialdehyde 2,1-aminomutase.